Reading from the N-terminus, the 521-residue chain is Potassium/proton antiporter CemA (521 aa).

Transmembrane regions (helical) follow at residues 68–88, 294–314, 399–419, 446–466, and 481–501; these read FVFIIYWSVLECKTSIYLLNI, ALASLQYLGCLILIPWGISFP, ILHLLTDIIYFAIPSASFISG, ILLLTDSCIGFHSPHGWEILI, and IISCFVSTFPVISDTVFKYWI.

It belongs to the CemA family.

It is found in the plastid. Its subcellular location is the chloroplast inner membrane. It carries out the reaction K(+)(in) + H(+)(out) = K(+)(out) + H(+)(in). Functionally, contributes to K(+)/H(+) antiport activity by supporting proton efflux to control proton extrusion and homeostasis in chloroplasts in a light-dependent manner to modulate photosynthesis. Prevents excessive induction of non-photochemical quenching (NPQ) under continuous-light conditions. Indirectly promotes efficient inorganic carbon uptake into chloroplasts. The polypeptide is Potassium/proton antiporter CemA (Huperzia lucidula (Shining clubmoss)).